The chain runs to 236 residues: Ribonuclease P protein component 3 (236 aa).

Belongs to the eukaryotic/archaeal RNase P protein component 3 family. As to quaternary structure, consists of a catalytic RNA component and at least 4-5 protein subunits.

Its subcellular location is the cytoplasm. The enzyme catalyses Endonucleolytic cleavage of RNA, removing 5'-extranucleotides from tRNA precursor.. Functionally, part of ribonuclease P, a protein complex that generates mature tRNA molecules by cleaving their 5'-ends. The polypeptide is Ribonuclease P protein component 3 (Natronomonas pharaonis (strain ATCC 35678 / DSM 2160 / CIP 103997 / JCM 8858 / NBRC 14720 / NCIMB 2260 / Gabara) (Halobacterium pharaonis)).